The following is a 272-amino-acid chain: tRNA pseudouridine synthase B (272 aa).

The Nucleophile role is filled by D38.

It belongs to the pseudouridine synthase TruB family. Type 1 subfamily.

It carries out the reaction uridine(55) in tRNA = pseudouridine(55) in tRNA. Functionally, responsible for synthesis of pseudouridine from uracil-55 in the psi GC loop of transfer RNAs. The protein is tRNA pseudouridine synthase B of Campylobacter jejuni subsp. jejuni serotype O:6 (strain 81116 / NCTC 11828).